A 253-amino-acid chain; its full sequence is Homeobox protein EMX2 (253 aa).

Positions 155 to 214 form a DNA-binding region, homeobox; sequence PKRIRTAFSPSQLLRLEHAFEKNHYVVGAERKQLAHSLSLTETQVKVWFQNRRTKFKRQK. The disordered stretch occupies residues 213 to 253; the sequence is QKLEEEGSDSQQKKKGTHHINRWRIATKQASPEEIDVTSDD. The span at 225–234 shows a compositional bias: basic residues; the sequence is KKKGTHHINR.

The protein belongs to the EMX homeobox family. Interacts with translation initiation factor EIF4E.

It is found in the nucleus. It localises to the cell projection. The protein localises to the axon. Transcription factor, which in cooperation with EMX1, acts to generate the boundary between the roof and archipallium in the developing brain. May function in combination with OTX1/2 to specify cell fates in the developing central nervous system. In the inner ear, it controls the distribution of GPR156 at hair cell boundaries, and regulates the organization of stereociliary bundles in opposite orientations across the line of polarity reversal (LPR). This is Homeobox protein EMX2 (EMX2) from Bos taurus (Bovine).